We begin with the raw amino-acid sequence, 760 residues long: General transcription and DNA repair factor IIH helicase subunit XPD (760 aa).

The region spanning 7–283 (GLLVYFPYDY…KETDEQRLRD (277 aa)) is the Helicase ATP-binding domain. An ATP-binding site is contributed by 42-49 (MPSGTGKT). C116, C134, C155, and C190 together coordinate [4Fe-4S] cluster. The short motif at 234–237 (DEAH) is the DEAH box element. The tract at residues 438–637 (MDASLAIKPV…TQSRILKARL (200 aa)) is mediates interaction with MMS19. A Nuclear localization signal motif is present at residues 682 to 695 (KRFARADKRGKLPR).

It belongs to the helicase family. RAD3/XPD subfamily. In terms of assembly, component of the 7-subunit TFIIH core complex composed of XPB/ERCC3, XPD/ERCC2, GTF2H1, GTF2H2, GTF2H3, GTF2H4 and GTF2H5, which is active in NER. The core complex associates with the 3-subunit CDK-activating kinase (CAK) module composed of CCNH/cyclin H, CDK7 and MNAT1 to form the 10-subunit holoenzyme (holo-TFIIH) active in transcription. The interaction with GTF2H2 results in the stimulation of the 5'--&gt;3' helicase activity. Component of the MMXD complex, which includes CIAO1, ERCC2, CIAO2B, MMS19 and SLC25A5. Interacts with CIAO1 and CIAO2B; the interaction WITH CIAO2B is direct. Interacts with ATF7IP. Interacts directly with MMS19. Part of TBP-based Pol II pre-initiation complex (PIC), in which Pol II core assembles with general transcription factors and other specific initiation factors including GTF2E1, GTF2E2, GTF2F1, GTF2F2, TCEA1, ERCC2, ERCC3, GTF2H2, GTF2H3, GTF2H4, GTF2H5, GTF2A1, GTF2A2, GTF2B and TBP; this large multi-subunit PIC complex mediates DNA unwinding and targets Pol II core to the transcription start site where the first phosphodiester bond forms. Mg(2+) is required as a cofactor. The cofactor is [4Fe-4S] cluster. Post-translationally, ISGylated.

The protein resides in the nucleus. The protein localises to the cytoplasm. It is found in the cytoskeleton. Its subcellular location is the spindle. It carries out the reaction Couples ATP hydrolysis with the unwinding of duplex DNA at the replication fork by translocating in the 5'-3' direction. This creates two antiparallel DNA single strands (ssDNA). The leading ssDNA polymer is the template for DNA polymerase III holoenzyme which synthesizes a continuous strand.. The enzyme catalyses ATP + H2O = ADP + phosphate + H(+). In terms of biological role, ATP-dependent 5'-3' DNA helicase. Component of the general transcription and DNA repair factor IIH (TFIIH) core complex which is involved in general and transcription-coupled nucleotide excision repair (NER) of damaged DNA. When complexed to CDK-activating kinase (CAK), involved in transcription by RNA polymerase II. In NER, TFIIH acts by opening DNA around the lesion to allow the excision of the damaged oligonucleotide and its replacement by a new DNA fragment. The ATP-dependent helicase activity of XPD/ERCC2 is required for DNA opening. In transcription, TFIIH has an essential role in transcription initiation. When the pre-initiation complex (PIC) has been established, TFIIH is required for promoter opening and promoter escape. Phosphorylation of the C-terminal tail (CTD) of the largest subunit of RNA polymerase II by the kinase module CAK controls the initiation of transcription. XPD/ERCC2 acts by forming a bridge between CAK and the core-TFIIH complex. Involved in the regulation of vitamin-D receptor activity. As part of the mitotic spindle-associated MMXD complex it plays a role in chromosome segregation. Might have a role in aging process and could play a causative role in the generation of skin cancers. The chain is General transcription and DNA repair factor IIH helicase subunit XPD from Cricetulus griseus (Chinese hamster).